The following is a 590-amino-acid chain: Auxin response factor 20 (590 aa).

Residues 126-224 constitute a DNA-binding region (TF-B3); it reads FTKVLTASDT…ELRVGIRRAR (99 aa). The region spanning 495–576 is the PB1 domain; sequence RTCTKVQMQG…MVKKILIYSK (82 aa).

It belongs to the ARF family. In terms of assembly, homodimers and heterodimers.

The protein localises to the nucleus. Auxin response factors (ARFs) are transcriptional factors that bind specifically to the DNA sequence 5'-TGTCTC-3' found in the auxin-responsive promoter elements (AuxREs). Could act as transcriptional activator or repressor. Formation of heterodimers with Aux/IAA proteins may alter their ability to modulate early auxin response genes expression. The protein is Auxin response factor 20 (ARF20) of Arabidopsis thaliana (Mouse-ear cress).